The primary structure comprises 336 residues: Phospho-N-acetylmuramoyl-pentapeptide-transferase (336 aa).

10 helical membrane passes run 3–23, 53–73, 78–98, 118–138, 143–163, 174–194, 200–220, 226–246, 251–271, and 316–336; these read LTLI…PYFI, GGTV…LFSI, SLAL…IGFL, LALQ…PSGI, VFGY…FWVV, GIDG…GVIA, FDVL…FCFN, VFMG…ISIA, WTLL…MLQV, and AFLW…LYVF.

It belongs to the glycosyltransferase 4 family. MraY subfamily. The cofactor is Mg(2+).

It localises to the cell membrane. The enzyme catalyses UDP-N-acetyl-alpha-D-muramoyl-L-alanyl-gamma-D-glutamyl-L-lysyl-D-alanyl-D-alanine + di-trans,octa-cis-undecaprenyl phosphate = Mur2Ac(oyl-L-Ala-gamma-D-Glu-L-Lys-D-Ala-D-Ala)-di-trans,octa-cis-undecaprenyl diphosphate + UMP. It participates in cell wall biogenesis; peptidoglycan biosynthesis. Its function is as follows. Catalyzes the initial step of the lipid cycle reactions in the biosynthesis of the cell wall peptidoglycan: transfers peptidoglycan precursor phospho-MurNAc-pentapeptide from UDP-MurNAc-pentapeptide onto the lipid carrier undecaprenyl phosphate, yielding undecaprenyl-pyrophosphoryl-MurNAc-pentapeptide, known as lipid I. The chain is Phospho-N-acetylmuramoyl-pentapeptide-transferase from Streptococcus pyogenes serotype M5 (strain Manfredo).